Here is a 215-residue protein sequence, read N- to C-terminus: Ankyrin repeat domain-containing protein 49 (215 aa).

ANK repeat units follow at residues 81 to 110 (DGYT…NPNA) and 114 to 143 (LGWT…DVNA).

In terms of assembly, interacts with Bdbt; interaction promotes the stability of both complex members.

The protein resides in the cytoplasm. It localises to the cytosol. Its subcellular location is the cell membrane. Required for regulating the establishment of planar cell polarity in the wing. Forms a complex with Bdbt which likely functions in the regulation of planar polarity by promoting the activity of Dco during planar polarity establishment. Within the complex, probably functions to stabilize Bdbt, while Bdbt directly promotes Dco activity in regulating phosphorylation of core proteins such as dsh, and asymmetric localization. The polypeptide is Ankyrin repeat domain-containing protein 49 (Drosophila melanogaster (Fruit fly)).